A 258-amino-acid chain; its full sequence is MHNSVASKLKLAELLALTKTEQILRLGQINAELEQLTALERVKWALENLEGTHVVSSSFGIQAALMLHLVTQAKSDIPVILTDTGYLFPETYRFIDELSQKLTLNLQVFRAQQSSNWQEAQYGKLWDQGIEGIEKYNKLNKVEPMRRALDELEAGTWFSGLRREQSQSRANLPILSIQNGVFKFLPVIDWTNKDVHYYLEEHGLSYHPLREQGYLSVGDTHTTKKWEPGMTEEETRFNGLKRECGLHEDDGEQYGSGI.

Cys-244 functions as the Nucleophile; cysteine thiosulfonate intermediate in the catalytic mechanism.

The protein belongs to the PAPS reductase family. CysH subfamily.

The protein localises to the cytoplasm. The catalysed reaction is [thioredoxin]-disulfide + sulfite + adenosine 3',5'-bisphosphate + 2 H(+) = [thioredoxin]-dithiol + 3'-phosphoadenylyl sulfate. It participates in sulfur metabolism; hydrogen sulfide biosynthesis; sulfite from sulfate: step 3/3. Functionally, catalyzes the formation of sulfite from phosphoadenosine 5'-phosphosulfate (PAPS) using thioredoxin as an electron donor. The polypeptide is Phosphoadenosine 5'-phosphosulfate reductase (Vibrio atlanticus (strain LGP32) (Vibrio splendidus (strain Mel32))).